The sequence spans 783 residues: Glucosidase YgjK (783 aa).

A signal peptide spans 1-22; it reads MKIKTILTPVTCALLISFSAHA. Residues 24–254 form an N-terminal domain region; that stretch reads NADNYKNVIN…TTLYTTYSHL (231 aa). The tract at residues 254–299 is linker; the sequence is LLTAQEVSKEQMQIRDILARPAFYLTASQQRWEEYLKKGLTNPDAT. The segment at 300–783 is a domain; that stretch reads PEQTRVAVKA…MLYNDFFRKQ (484 aa). Ca(2+)-binding residues include Asp-454, Asn-456, Asn-458, Val-460, and Glu-462. Catalysis depends on Asp-524, which acts as the Proton donor. Glu-572 lines the Ca(2+) pocket. Glu-750 acts as the Proton acceptor in catalysis.

This sequence belongs to the glycosyl hydrolase 63 family.

In terms of biological role, glucoside hydrolase that cleaves the alpha-1,3-glucosidic linkage in nigerose. Has very low activity towards maltooligosaccharides, soluble starch, nigerotriose, kojibiose and trehalose. The protein is Glucosidase YgjK (ygjK) of Escherichia coli (strain K12).